A 261-amino-acid chain; its full sequence is Cytochrome c oxidase subunit 3 (261 aa).

Residues 1–15 (MTNQLHPFHMTNPSP) lie on the Mitochondrial matrix side of the membrane. Residues 16-34 (WPLTGATAALLMTSGLIMW) form a helical membrane-spanning segment. The Mitochondrial intermembrane portion of the chain corresponds to 35 to 40 (FHYNSS). Residues 41-66 (QLIMLGLLIMLLTLTQWWRDIVREST) form a helical membrane-spanning segment. Topologically, residues 67–72 (FQGHHT) are mitochondrial matrix. The helical transmembrane segment at 73–105 (PSVQNNLRYGMILFITSEILFFTGFFWAFYHSS) threads the bilayer. Topologically, residues 106–128 (LSPTAELGNIWPPTGITPLNPFE) are mitochondrial intermembrane. Residues 129-152 (VPLLNTAVLLASGVTITWAHHSLM) traverse the membrane as a helical segment. Topologically, residues 153-155 (EGN) are mitochondrial matrix. A helical membrane pass occupies residues 156-183 (RPQTLQALTLTIILGTYFTILQAMEYFE). At 184–190 (ASFTIAD) the chain is on the mitochondrial intermembrane side. Residues 191–223 (SIYGSTFFVATGFHGLHVIIGSTFLIVCLMRQL) form a helical membrane-spanning segment. The Mitochondrial matrix segment spans residues 224–232 (KYHFTSHHH). The helical transmembrane segment at 233-256 (FGFEAAAWYWHFVDVIWLFLYLSI) threads the bilayer. The Mitochondrial intermembrane portion of the chain corresponds to 257 to 261 (YWWGS).

The protein belongs to the cytochrome c oxidase subunit 3 family. Component of the cytochrome c oxidase (complex IV, CIV), a multisubunit enzyme composed of 14 subunits. The complex is composed of a catalytic core of 3 subunits MT-CO1, MT-CO2 and MT-CO3, encoded in the mitochondrial DNA, and 11 supernumerary subunits COX4I, COX5A, COX5B, COX6A, COX6B, COX6C, COX7A, COX7B, COX7C, COX8 and NDUFA4, which are encoded in the nuclear genome. The complex exists as a monomer or a dimer and forms supercomplexes (SCs) in the inner mitochondrial membrane with NADH-ubiquinone oxidoreductase (complex I, CI) and ubiquinol-cytochrome c oxidoreductase (cytochrome b-c1 complex, complex III, CIII), resulting in different assemblies (supercomplex SCI(1)III(2)IV(1) and megacomplex MCI(2)III(2)IV(2)).

The protein localises to the mitochondrion inner membrane. It catalyses the reaction 4 Fe(II)-[cytochrome c] + O2 + 8 H(+)(in) = 4 Fe(III)-[cytochrome c] + 2 H2O + 4 H(+)(out). Its function is as follows. Component of the cytochrome c oxidase, the last enzyme in the mitochondrial electron transport chain which drives oxidative phosphorylation. The respiratory chain contains 3 multisubunit complexes succinate dehydrogenase (complex II, CII), ubiquinol-cytochrome c oxidoreductase (cytochrome b-c1 complex, complex III, CIII) and cytochrome c oxidase (complex IV, CIV), that cooperate to transfer electrons derived from NADH and succinate to molecular oxygen, creating an electrochemical gradient over the inner membrane that drives transmembrane transport and the ATP synthase. Cytochrome c oxidase is the component of the respiratory chain that catalyzes the reduction of oxygen to water. Electrons originating from reduced cytochrome c in the intermembrane space (IMS) are transferred via the dinuclear copper A center (CU(A)) of subunit 2 and heme A of subunit 1 to the active site in subunit 1, a binuclear center (BNC) formed by heme A3 and copper B (CU(B)). The BNC reduces molecular oxygen to 2 water molecules using 4 electrons from cytochrome c in the IMS and 4 protons from the mitochondrial matrix. This chain is Cytochrome c oxidase subunit 3 (MT-CO3), found in Pelomedusa subrufa (African side-necked turtle).